The sequence spans 309 residues: Ribosomal protein L11 methyltransferase (309 aa).

4 residues coordinate S-adenosyl-L-methionine: threonine 152, glycine 178, aspartate 200, and asparagine 242.

This sequence belongs to the methyltransferase superfamily. PrmA family.

The protein localises to the cytoplasm. The enzyme catalyses L-lysyl-[protein] + 3 S-adenosyl-L-methionine = N(6),N(6),N(6)-trimethyl-L-lysyl-[protein] + 3 S-adenosyl-L-homocysteine + 3 H(+). Methylates ribosomal protein L11. The protein is Ribosomal protein L11 methyltransferase of Pelobacter propionicus (strain DSM 2379 / NBRC 103807 / OttBd1).